A 98-amino-acid chain; its full sequence is Large ribosomal subunit protein uL23 (98 aa).

This sequence belongs to the universal ribosomal protein uL23 family. Part of the 50S ribosomal subunit. Contacts protein L29, and trigger factor when it is bound to the ribosome.

In terms of biological role, one of the early assembly proteins it binds 23S rRNA. One of the proteins that surrounds the polypeptide exit tunnel on the outside of the ribosome. Forms the main docking site for trigger factor binding to the ribosome. This chain is Large ribosomal subunit protein uL23, found in Herpetosiphon aurantiacus (strain ATCC 23779 / DSM 785 / 114-95).